The following is a 269-amino-acid chain: S-adenosylmethionine decarboxylase proenzyme (269 aa).

Serine 118 acts as the Schiff-base intermediate with substrate; via pyruvic acid in catalysis. The residue at position 118 (serine 118) is a Pyruvic acid (Ser); by autocatalysis. Histidine 123 (proton acceptor; for processing activity) is an active-site residue. Cysteine 146 (proton donor; for catalytic activity) is an active-site residue.

Belongs to the prokaryotic AdoMetDC family. Type 2 subfamily. As to quaternary structure, heterooctamer of four alpha and four beta chains arranged as a tetramer of alpha/beta heterodimers. Pyruvate serves as cofactor. In terms of processing, is synthesized initially as an inactive proenzyme. Formation of the active enzyme involves a self-maturation process in which the active site pyruvoyl group is generated from an internal serine residue via an autocatalytic post-translational modification. Two non-identical subunits are generated from the proenzyme in this reaction, and the pyruvate is formed at the N-terminus of the alpha chain, which is derived from the carboxyl end of the proenzyme. The post-translation cleavage follows an unusual pathway, termed non-hydrolytic serinolysis, in which the side chain hydroxyl group of the serine supplies its oxygen atom to form the C-terminus of the beta chain, while the remainder of the serine residue undergoes an oxidative deamination to produce ammonia and the pyruvoyl group blocking the N-terminus of the alpha chain.

It carries out the reaction S-adenosyl-L-methionine + H(+) = S-adenosyl 3-(methylsulfanyl)propylamine + CO2. It participates in amine and polyamine biosynthesis; S-adenosylmethioninamine biosynthesis; S-adenosylmethioninamine from S-adenosyl-L-methionine: step 1/1. Functionally, catalyzes the decarboxylation of S-adenosylmethionine to S-adenosylmethioninamine (dcAdoMet), the propylamine donor required for the synthesis of the polyamines spermine and spermidine from the diamine putrescine. The sequence is that of S-adenosylmethionine decarboxylase proenzyme from Brevibacillus brevis (strain 47 / JCM 6285 / NBRC 100599).